A 500-amino-acid polypeptide reads, in one-letter code: L-arabinose isomerase (500 aa).

Positions 306, 333, 350, and 450 each coordinate Mn(2+).

The protein belongs to the arabinose isomerase family. Homohexamer. Mn(2+) serves as cofactor.

The catalysed reaction is beta-L-arabinopyranose = L-ribulose. Its pathway is carbohydrate degradation; L-arabinose degradation via L-ribulose; D-xylulose 5-phosphate from L-arabinose (bacterial route): step 1/3. Its function is as follows. Catalyzes the conversion of L-arabinose to L-ribulose. The sequence is that of L-arabinose isomerase from Escherichia coli O157:H7.